A 273-amino-acid chain; its full sequence is uncharacterized protein (273 aa).

Residues 29 to 131 (TLVCVHGFLS…VVLLCSSGYL (103 aa)) enclose the AB hydrolase-1 domain. Active-site residues include S102 and H254.

This sequence belongs to the DmpD/TodF/XylF esterase family.

This is an uncharacterized protein from Bacillus subtilis (strain 168).